The following is a 560-amino-acid chain: Oxygen-dependent choline dehydrogenase (560 aa).

6–35 (DYIIIGGGSAGSVLGGRLSEDVSNNVLVLE) contributes to the FAD binding site. The Proton acceptor role is filled by H472.

Belongs to the GMC oxidoreductase family. It depends on FAD as a cofactor.

The catalysed reaction is choline + A = betaine aldehyde + AH2. The enzyme catalyses betaine aldehyde + NAD(+) + H2O = glycine betaine + NADH + 2 H(+). It functions in the pathway amine and polyamine biosynthesis; betaine biosynthesis via choline pathway; betaine aldehyde from choline (cytochrome c reductase route): step 1/1. In terms of biological role, involved in the biosynthesis of the osmoprotectant glycine betaine. Catalyzes the oxidation of choline to betaine aldehyde and betaine aldehyde to glycine betaine at the same rate. The chain is Oxygen-dependent choline dehydrogenase from Staphylococcus xylosus.